The following is a 274-amino-acid chain: MGNTIRAFVAFIPTDRCQSYVVGDLREMPLDRMVDLSGSQLRRFPLHVCSFTELVKLYLSDNHLHSLPPDLAQLQNLQILALDFNNFKALPRVVCTLKQLCILYLGNNKLCDLPDELSLLQNLRTLWLESNCLTRLPDVVCELSLLKTLHAGSNALRLLPGQLRRLRELRTIWLSGNQLADFPSVLLRMPFLEVIDVDRNSIRYFPSLAHLTNLKLVIYDHNPCRNAPKVGKGVRRVGRWAEETPEPDPRKARRYALAKEENQEPPPPLLPSSS.

8 LRR repeats span residues 30–51 (LDRM…VCSF), 52–74 (TELV…LAQL), 76–97 (NLQI…VCTL), 98–120 (KQLC…LSLL), 121–143 (QNLR…VCEL), 145–166 (LLKT…LRRL), 167–189 (RELR…LLRM), and 191–213 (FLEV…HLTN). A disordered region spans residues 236–274 (RVGRWAEETPEPDPRKARRYALAKEENQEPPPPLLPSSS). Residues 239 to 250 (RWAEETPEPDPR) show a composition bias toward basic and acidic residues. Residues 264-274 (EPPPPLLPSSS) show a composition bias toward pro residues.

In terms of tissue distribution, detected specifically in the heart.

The protein localises to the nucleus. Functionally, may play important roles in cardiac development and/or cardiac function. This Mus musculus (Mouse) protein is Leucine-rich repeat-containing protein 10 (Lrrc10).